The following is a 518-amino-acid chain: DNA-binding protein Ikaros (518 aa).

The interval 1 to 51 (METDEAQDMSQVSGKESPPISDVPDDADEPMPVPEDLSTTTGGQQSVKNER) is disordered. The segment covering 37–47 (LSTTTGGQQSV) has biased composition (polar residues). 4 consecutive C2H2-type zinc fingers follow at residues 117–139 (LKCD…NRSH), 145–167 (FQCN…IKLH), 173–195 (FKCH…LRTH), and 201–224 (HKCG…ERCH). Residues 381-405 (SVSSERDASPSNSCQDSTDTESNNE) are disordered. C2H2-type zinc fingers lie at residues 461-483 (YKCE…MGCH) and 489-513 (FECN…RGEH).

The protein belongs to the Ikaros C2H2-type zinc-finger protein family. As to expression, expressed in embryonic hematopoietic organs such as the bursa of Fabricius, thymus and spleen. In the adult, expressed in spleen, thymus, bursa and peripheral blood leukocytes.

The protein localises to the nucleus. Functionally, binds and activates the enhancer (delta-A element) of the CD3-delta gene. Functions in the specification and the maturation of the T-lymphocyte. Also interacts with a critical control element in the TDT (terminal deoxynucleotidyltransferase) promoter as well as with the promoters for other genes expressed during early stages of B- and T-cell development. Function is isoform-specific and is modulated by dominant-negative inactive isoforms. The chain is DNA-binding protein Ikaros (IKZF1) from Gallus gallus (Chicken).